Here is a 592-residue protein sequence, read N- to C-terminus: A-type ATP synthase subunit A (592 aa).

234–241 (GPFGSGKT) contributes to the ATP binding site.

This sequence belongs to the ATPase alpha/beta chains family. In terms of assembly, has multiple subunits with at least A(3), B(3), C, D, E, F, H, I and proteolipid K(x).

The protein localises to the cell membrane. The enzyme catalyses ATP + H2O + 4 H(+)(in) = ADP + phosphate + 5 H(+)(out). Functionally, produces ATP from ADP in the presence of a proton gradient across the membrane. The archaeal alpha chain is a catalytic subunit. Component of the A-type ATP synthase that produces ATP from ADP in the presence of a proton gradient across the membrane. The A chain is the catalytic subunit. The protein is A-type ATP synthase subunit A of Sulfolobus acidocaldarius (strain ATCC 33909 / DSM 639 / JCM 8929 / NBRC 15157 / NCIMB 11770).